A 461-amino-acid polypeptide reads, in one-letter code: Transforming growth factor beta-1-induced transcript 1 protein (461 aa).

Met1 is subject to N-acetylmethionine. The interval 1-86 (MEDLDALLSD…PPFSSSSGVL (86 aa)) is disordered. Residues 1-200 (MEDLDALLSD…GCPSPPGQTN (200 aa)) form a transcription activation region. The interaction with PTK2B/PYK2 stretch occupies residues 1-240 (MEDLDALLSD…CNKPIAGQVV (240 aa)). Residues 3–15 (DLDALLSDLETTT) carry the LD motif 1 motif. Position 33 is a phosphothreonine (Thr33). Position 38 is a phosphotyrosine (Tyr38). Over residues 41 to 52 (QPQTGSGESSGA) the composition is skewed to polar residues. Position 60 is a phosphotyrosine; by FAK2 and FYN (Tyr60). The residue at position 68 (Ser68) is a Phosphoserine. The segment covering 69–83 (PKSVAPVAPPFSSSS) has biased composition (low complexity). The tract at residues 83 to 136 (SGVLGNGLCELDRLLQELNATQFNITDEIMSQFPSSKMAEGEGKEDQSEDKSIT) is interaction with PTK2/FAK1. The LD motif 2 motif lies at 92–104 (ELDRLLQELNATQ). Residues 116–154 (PSSKMAEGEGKEDQSEDKSITTVPSSTFPAPSKPSATSA) form a disordered region. Basic and acidic residues predominate over residues 121 to 134 (AEGEGKEDQSEDKS). Polar residues predominate over residues 135–154 (ITTVPSSTFPAPSKPSATSA). A phosphoserine mark is found at Ser140, Ser141, Ser164, and Ser186. Positions 157–168 (ELDRLMASLSDF) match the LD motif 3 motif. The disordered stretch occupies residues 171-204 (QNHLPASGPPQPPAVSPTREGCPSPPGQTNKGSL). Thr188 is subject to Phosphothreonine. Position 194 is a phosphoserine (Ser194). Positions 203–215 (SLDTMLGLLQSDL) match the LD motif 4 motif. LIM zinc-binding domains are found at residues 226–285 (GLCG…RFSP), 286–343 (RCGF…QLFA), 344–403 (PRCQ…QRGS), and 404–461 (LCAT…KLFG). The residue at position 403 (Ser403) is a Phosphoserine. Thr407 is modified (phosphothreonine).

This sequence belongs to the paxillin family. In terms of assembly, homooligomer. Interacts with PPARG. Interacts with TRAF4. Interacts with CRIP2. Interacts with HSPB1. Interacts with ILK. Interacts with LIMS1 and LIMS2. Interacts with NCK2. Interacts with NUDT16L1. Interacts with PAK. Interacts with PTPN12. Interacts with TCF3. Interacts with TCF7L2. Interacts with VCL. Interacts (via LD motif 3) with GIT1. Also interacts with GIT2. Forms a complex with ARHGEF7. Interacts with AR/androgen receptor in a ligand-dependent manner. Interacts with CSK. Interacts with PTK2/FAK1 and PTK2B/PYK2. Interacts with SLC6A3 and SLC6A4. Interacts with NR3C1. Interacts with SMAD3. Interacts with MAPK15. Interacts with SRC. Interacts with LYN. Interacts with talin. Interacts (via LIM zinc-binding domain 2) with CBLC (via RING-type zinc finger); the interaction is direct and enhances CBLC E3 ubiquitin-protein ligase activity. Interacts with PARVA. Interacts with PXN. In terms of processing, phosphorylated by gonadotropin-releasing hormone-activated SRC. Strongly expressed in large intestine, lung, spleen, testis, uterus and to a lower extent in brain, kidney and liver (at protein level). In brain, expressed by neuronal and non neuronal cells (at protein level).

Its subcellular location is the cell junction. It is found in the focal adhesion. It localises to the nucleus matrix. The protein localises to the cytoplasm. The protein resides in the cytoskeleton. Its function is as follows. Functions as a molecular adapter coordinating multiple protein-protein interactions at the focal adhesion complex and in the nucleus. Links various intracellular signaling modules to plasma membrane receptors and regulates the Wnt and TGFB signaling pathways. May also regulate SLC6A3 and SLC6A4 targeting to the plasma membrane hence regulating their activity. In the nucleus, functions as a nuclear receptor coactivator regulating glucocorticoid, androgen, mineralocorticoid and progesterone receptor transcriptional activity. May play a role in the processes of cell growth, proliferation, migration, differentiation and senescence. May have a zinc-dependent DNA-binding activity. The sequence is that of Transforming growth factor beta-1-induced transcript 1 protein (Tgfb1i1) from Rattus norvegicus (Rat).